The primary structure comprises 188 residues: MIKNSNINSNSRLDDPILQEIELNKVEIGKHASWSVSSAKPGSGVEQLRDNNLDTFWQSDAQQPHHITIQFPKKCYIENLLIHCDYKLDESYTPCKISIKAGTILHDLQEIILTELEEPSGWINIPLSFNNNSLKANLLQISILSNLKNGRDSHIRQIKVYGKKISIENYTQYPKFNSPEVSMFQTLR.

Positions 4–187 (NSNINSNSRL…SPEVSMFQTL (184 aa)) constitute a DOC domain.

The protein belongs to the APC10 family. The APC/C is composed of at least 13 subunits that stay tightly associated throughout the cell cycle: anapc1, anapc2, anapc3, anapc4, anapc5, anapc6, anapc7, anapc8, anapc10, anapc11, cdc20, cdc26 and cdh1.

The protein resides in the nucleus. It functions in the pathway protein modification; protein ubiquitination. Component of the anaphase promoting complex/cyclosome (APC/C), a cell cycle-regulated E3 ubiquitin-protein ligase complex that controls progression through mitosis and the G1 phase of the cell cycle. In Dictyostelium discoideum (Social amoeba), this protein is Anaphase-promoting complex subunit 10 (anapc10).